The chain runs to 361 residues: Peptide chain release factor 1 (361 aa).

Gln236 bears the N5-methylglutamine mark.

This sequence belongs to the prokaryotic/mitochondrial release factor family. In terms of processing, methylated by PrmC. Methylation increases the termination efficiency of RF1.

The protein localises to the cytoplasm. In terms of biological role, peptide chain release factor 1 directs the termination of translation in response to the peptide chain termination codons UAG and UAA. This is Peptide chain release factor 1 from Lactobacillus delbrueckii subsp. bulgaricus (strain ATCC BAA-365 / Lb-18).